Here is a 515-residue protein sequence, read N- to C-terminus: Bifunctional purine biosynthesis protein PurH (515 aa).

In terms of domain architecture, MGS-like spans 1 to 145; it reads MTKRALISVS…KNHASVTVVV (145 aa).

This sequence belongs to the PurH family.

It carries out the reaction (6R)-10-formyltetrahydrofolate + 5-amino-1-(5-phospho-beta-D-ribosyl)imidazole-4-carboxamide = 5-formamido-1-(5-phospho-D-ribosyl)imidazole-4-carboxamide + (6S)-5,6,7,8-tetrahydrofolate. The enzyme catalyses IMP + H2O = 5-formamido-1-(5-phospho-D-ribosyl)imidazole-4-carboxamide. It participates in purine metabolism; IMP biosynthesis via de novo pathway; 5-formamido-1-(5-phospho-D-ribosyl)imidazole-4-carboxamide from 5-amino-1-(5-phospho-D-ribosyl)imidazole-4-carboxamide (10-formyl THF route): step 1/1. The protein operates within purine metabolism; IMP biosynthesis via de novo pathway; IMP from 5-formamido-1-(5-phospho-D-ribosyl)imidazole-4-carboxamide: step 1/1. The chain is Bifunctional purine biosynthesis protein PurH from Streptococcus pyogenes serotype M6 (strain ATCC BAA-946 / MGAS10394).